The sequence spans 361 residues: Phosphoserine aminotransferase (361 aa).

Arg-43 lines the L-glutamate pocket. Pyridoxal 5'-phosphate-binding positions include Ala-77–Ser-78, Trp-103, Thr-153, Asp-173, and Gln-196. Lys-197 carries the N6-(pyridoxal phosphate)lysine modification. Asn-238–Thr-239 lines the pyridoxal 5'-phosphate pocket.

This sequence belongs to the class-V pyridoxal-phosphate-dependent aminotransferase family. SerC subfamily. Homodimer. The cofactor is pyridoxal 5'-phosphate.

Its subcellular location is the cytoplasm. The catalysed reaction is O-phospho-L-serine + 2-oxoglutarate = 3-phosphooxypyruvate + L-glutamate. It catalyses the reaction 4-(phosphooxy)-L-threonine + 2-oxoglutarate = (R)-3-hydroxy-2-oxo-4-phosphooxybutanoate + L-glutamate. It functions in the pathway amino-acid biosynthesis; L-serine biosynthesis; L-serine from 3-phospho-D-glycerate: step 2/3. Its pathway is cofactor biosynthesis; pyridoxine 5'-phosphate biosynthesis; pyridoxine 5'-phosphate from D-erythrose 4-phosphate: step 3/5. In terms of biological role, catalyzes the reversible conversion of 3-phosphohydroxypyruvate to phosphoserine and of 3-hydroxy-2-oxo-4-phosphonooxybutanoate to phosphohydroxythreonine. This is Phosphoserine aminotransferase from Pseudomonas fluorescens (strain SBW25).